The following is a 1125-amino-acid chain: Exportin-6 (1125 aa).

Position 2 is an N-acetylalanine (Ala2). An Importin N-terminal domain is found at Ile31–Ala97. Residue Ser199 is modified to Phosphoserine. Residues Thr201 and Thr204 each carry the phosphothreonine modification. Phosphoserine occurs at positions 208 and 224.

This sequence belongs to the exportin family. Found in a complex with XPO6, Ran, ACTB and PFN1. Interacts with ACTB. Interacts with ACTB in a RanGTP-dependent manner.

The protein resides in the nucleus. The protein localises to the cytoplasm. Functionally, mediates the nuclear export of actin and profilin-actin complexes in somatic cells. The sequence is that of Exportin-6 (Xpo6) from Mus musculus (Mouse).